We begin with the raw amino-acid sequence, 479 residues long: Variant surface glycoprotein ILTAT 1.22 (479 aa).

The signal sequence occupies residues 1–12 (MDTAQVFALFYM). Residues N120 and N458 are each glycosylated (N-linked (GlcNAc...) asparagine). N462 carries the GPI-anchor amidated asparagine lipid modification. Residues 463–479 (NSFAIKTSTLLLAVLLF) constitute a propeptide, removed in mature form.

The protein localises to the cell membrane. In terms of biological role, VSG forms a coat on the surface of the parasite. The trypanosome evades the immune response of the host by expressing a series of antigenically distinct VSGs from an estimated 1000 VSG genes. This is Variant surface glycoprotein ILTAT 1.22 from Trypanosoma brucei brucei.